The sequence spans 270 residues: Methionine-rich protein (270 aa).

The first 18 residues, 1-18 (MLSLWAIGLLGLLNQVEA), serve as a signal peptide directing secretion. The segment covering 31 to 52 (QRSAQFSSSGWGTSPAAQNPWS) has biased composition (polar residues). A disordered region spans residues 31–95 (QRSAQFSSSG…MPGSMPGAMP (65 aa)). The segment covering 56–95 (PMPNTNMPNMNTGSLPGSMPGAMPGSMPGAMPGSMPGAMP) has biased composition (low complexity).

In terms of tissue distribution, component of the acid-soluble organic matrix of calcified layers of the shell (at protein level).

It is found in the secreted. The sequence is that of Methionine-rich protein from Lottia gigantea (Giant owl limpet).